Consider the following 251-residue polypeptide: 1-(5-phosphoribosyl)-5-[(5-phosphoribosylamino)methylideneamino] imidazole-4-carboxamide isomerase (251 aa).

The active-site Proton acceptor is the D8. D131 functions as the Proton donor in the catalytic mechanism.

It belongs to the HisA/HisF family.

It localises to the cytoplasm. The enzyme catalyses 1-(5-phospho-beta-D-ribosyl)-5-[(5-phospho-beta-D-ribosylamino)methylideneamino]imidazole-4-carboxamide = 5-[(5-phospho-1-deoxy-D-ribulos-1-ylimino)methylamino]-1-(5-phospho-beta-D-ribosyl)imidazole-4-carboxamide. It participates in amino-acid biosynthesis; L-histidine biosynthesis; L-histidine from 5-phospho-alpha-D-ribose 1-diphosphate: step 4/9. This is 1-(5-phosphoribosyl)-5-[(5-phosphoribosylamino)methylideneamino] imidazole-4-carboxamide isomerase from Azoarcus sp. (strain BH72).